Here is a 321-residue protein sequence, read N- to C-terminus: Non-canonical heme oxygenase HOZ, chloroplastic (321 aa).

The N-terminal 45 residues, 1–45 (MKSLVAHFSTPLITARLVPRCIIHRASISAVSFSTVRRRFSPLTM), are a transit peptide targeting the chloroplast. Residues 96-116 (CGMLSTFSQKYEGYPSGSMVD) form a dimerization region. Residues Ser130, Val134, and His135 each coordinate heme b. Dimerization regions lie at residues 144–166 (KCSLLIARDPEDRTGLRITLHGD) and 205–208 (KVVR).

Homodimer. Binds to heme in the interdimer interface; the heme iron is coordinated by a fixed water molecule.

Its subcellular location is the plastid. It localises to the chloroplast. In terms of biological role, dimeric beta-barrel protein binding to heme and catalyzing its degradation to produce biliverdin. May function in the tetrapyrrole biosynthetic pathway. This Arabidopsis thaliana (Mouse-ear cress) protein is Non-canonical heme oxygenase HOZ, chloroplastic.